The following is a 787-amino-acid chain: MKAVETRILELRAELDQHNYRYHVLDEPSIPDVEYDRLFHELKALEAENPHLVTPDSPTQRVGSAALSAFTQVRHEMPMLSLGNAFEENDMLEFDRRVTEGLDLPAGDLFGEGGKVQYSCEPKLDGLAVSLLYRDGALVRGATRGDGTTGEDISVNVRTVRNIPLKLQGKGWPDVLEVRGEVFMSKAGFERLNASQLEIGGKTFANPRNAAAGSLRQLDSKITANRPLEFCCYGLGQTSAEIADTHIGVLEALKKWGMPVSRELKLANGVEECLAYYRDIGERRLTLTYEIDGVVFKVNNLAAQRELGFRAREPRWAIAHKFPAMEELTELLDVEFQVGRTGAVTPVARLKPVKVAGVMVANATLHNMDEVARLGLMIGDTVIIRRAGDVIPQVVQVVAERRPENARAVQVPQTCPVCGSHVERTQLIKRSKGKETVTEGAVYRCVGRLACGAQLKQAIIHYVSRRAMDIEGLGDKTIEQLVDEKLIGSPADLYKLKYEQIIDLEGFAEISSNKLLKAIADSRQPTLARFIYALGIPDVGEETAKVLARSLASLERVKQALPEVLTYLPDVGLEVAYEIRSFFEDEHNRSVIDALLGECGLQLQDQGELGAEFAASTTLEGLIDKLHIPSVGPGAAQKLADRFGTLEAIISADWLDMRQALPEKQAKSVRDFFDDSANAERARAIEAQLKDFGMHWRSEKKTVEGLPLAGQTWVLTGSLERMSRDVAKEKLESLGAKVSGSVSAKTHTVVAGPGAGSKLTKANELGLTVLDEDALLKRLIELGVAVD.

Residues 32 to 36, 81 to 82, and E121 contribute to the NAD(+) site; these read DVEYD and SL. The N6-AMP-lysine intermediate role is filled by K123. R144, E181, K297, and K321 together coordinate NAD(+). Positions 415, 418, 445, and 451 each coordinate Zn(2+). A BRCT domain is found at 703–787; sequence VEGLPLAGQT…RLIELGVAVD (85 aa).

The protein belongs to the NAD-dependent DNA ligase family. LigA subfamily. It depends on Mg(2+) as a cofactor. Mn(2+) is required as a cofactor.

It carries out the reaction NAD(+) + (deoxyribonucleotide)n-3'-hydroxyl + 5'-phospho-(deoxyribonucleotide)m = (deoxyribonucleotide)n+m + AMP + beta-nicotinamide D-nucleotide.. Functionally, DNA ligase that catalyzes the formation of phosphodiester linkages between 5'-phosphoryl and 3'-hydroxyl groups in double-stranded DNA using NAD as a coenzyme and as the energy source for the reaction. It is essential for DNA replication and repair of damaged DNA. The sequence is that of DNA ligase from Pseudomonas syringae pv. syringae (strain B728a).